A 364-amino-acid chain; its full sequence is Probable dual-specificity RNA methyltransferase RlmN (364 aa).

The active-site Proton acceptor is the E106. Residues 112–350 (YPQRNTVCIS…SCTVRDTRGR (239 aa)) form the Radical SAM core domain. A disulfide bond links C119 and C356. Positions 126, 130, and 133 each coordinate [4Fe-4S] cluster. S-adenosyl-L-methionine is bound by residues 177–178 (GE), S211, 234–236 (SLH), and N313. The active-site S-methylcysteine intermediate is C356.

This sequence belongs to the radical SAM superfamily. RlmN family. [4Fe-4S] cluster serves as cofactor.

It localises to the cytoplasm. The catalysed reaction is adenosine(2503) in 23S rRNA + 2 reduced [2Fe-2S]-[ferredoxin] + 2 S-adenosyl-L-methionine = 2-methyladenosine(2503) in 23S rRNA + 5'-deoxyadenosine + L-methionine + 2 oxidized [2Fe-2S]-[ferredoxin] + S-adenosyl-L-homocysteine. The enzyme catalyses adenosine(37) in tRNA + 2 reduced [2Fe-2S]-[ferredoxin] + 2 S-adenosyl-L-methionine = 2-methyladenosine(37) in tRNA + 5'-deoxyadenosine + L-methionine + 2 oxidized [2Fe-2S]-[ferredoxin] + S-adenosyl-L-homocysteine. Functionally, specifically methylates position 2 of adenine 2503 in 23S rRNA and position 2 of adenine 37 in tRNAs. The polypeptide is Probable dual-specificity RNA methyltransferase RlmN (Mycobacterium marinum (strain ATCC BAA-535 / M)).